A 287-amino-acid chain; its full sequence is Glutamate racemase (287 aa).

Residues 32–33 (DS) and 64–65 (YG) contribute to the substrate site. C96 (proton donor/acceptor) is an active-site residue. Substrate is bound at residue 97 to 98 (NT). C208 (proton donor/acceptor) is an active-site residue. Residue 209 to 210 (TH) coordinates substrate.

This sequence belongs to the aspartate/glutamate racemases family.

The enzyme catalyses L-glutamate = D-glutamate. Its pathway is cell wall biogenesis; peptidoglycan biosynthesis. Its function is as follows. Provides the (R)-glutamate required for cell wall biosynthesis. In Serratia proteamaculans (strain 568), this protein is Glutamate racemase.